The sequence spans 419 residues: Gamma-glutamyl phosphate reductase (419 aa).

It belongs to the gamma-glutamyl phosphate reductase family.

It localises to the cytoplasm. The enzyme catalyses L-glutamate 5-semialdehyde + phosphate + NADP(+) = L-glutamyl 5-phosphate + NADPH + H(+). The protein operates within amino-acid biosynthesis; L-proline biosynthesis; L-glutamate 5-semialdehyde from L-glutamate: step 2/2. Its function is as follows. Catalyzes the NADPH-dependent reduction of L-glutamate 5-phosphate into L-glutamate 5-semialdehyde and phosphate. The product spontaneously undergoes cyclization to form 1-pyrroline-5-carboxylate. The protein is Gamma-glutamyl phosphate reductase of Solidesulfovibrio magneticus (strain ATCC 700980 / DSM 13731 / RS-1) (Desulfovibrio magneticus).